Reading from the N-terminus, the 102-residue chain is Small ribosomal subunit protein uS10 (102 aa).

Belongs to the universal ribosomal protein uS10 family. As to quaternary structure, part of the 30S ribosomal subunit.

Its function is as follows. Involved in the binding of tRNA to the ribosomes. The polypeptide is Small ribosomal subunit protein uS10 (Leuconostoc citreum (strain KM20)).